We begin with the raw amino-acid sequence, 935 residues long: Isoleucine--tRNA ligase (935 aa).

The 'HIGH' region signature appears at 58–68 (PYANGSIHVGH). Glutamate 558 contacts L-isoleucyl-5'-AMP. A 'KMSKS' region motif is present at residues 599–603 (KMSKS). Lysine 602 contacts ATP. 4 residues coordinate Zn(2+): cysteine 897, cysteine 900, cysteine 917, and cysteine 920.

This sequence belongs to the class-I aminoacyl-tRNA synthetase family. IleS type 1 subfamily. Monomer. It depends on Zn(2+) as a cofactor.

It is found in the cytoplasm. It catalyses the reaction tRNA(Ile) + L-isoleucine + ATP = L-isoleucyl-tRNA(Ile) + AMP + diphosphate. Catalyzes the attachment of isoleucine to tRNA(Ile). As IleRS can inadvertently accommodate and process structurally similar amino acids such as valine, to avoid such errors it has two additional distinct tRNA(Ile)-dependent editing activities. One activity is designated as 'pretransfer' editing and involves the hydrolysis of activated Val-AMP. The other activity is designated 'posttransfer' editing and involves deacylation of mischarged Val-tRNA(Ile). The chain is Isoleucine--tRNA ligase from Francisella tularensis subsp. tularensis (strain WY96-3418).